We begin with the raw amino-acid sequence, 336 residues long: Aldo-keto reductase str7 (336 aa).

NADP(+) is bound at residue D57. Y62 (proton donor) is an active-site residue. Position 124 (H124) interacts with substrate. NADP(+)-binding positions include 154 to 155 (SE), Q174, 206 to 220 (SPLG…YKSP), and 283 to 291 (KKIKYLEEN).

Belongs to the aldo/keto reductase family. Aldo/keto reductase 2 subfamily.

It participates in mycotoxin biosynthesis. In terms of biological role, aldo-keto reductase; part of the gene cluster that mediates the biosynthesis of strobilurin A, an antifungal polyketide that contains a key beta-methoxyacrylate toxophore that targets the complex III of the mitochondrial electron transport chain. Strobilurin biosynthesis begins with construction of benzoyl CoA by step-wise elimination of ammonia from phenylalanine by the phenylalanine ammonia-lyase str11, oxygenation by str8 and retro-Claisen reaction to form benzoic acid, which is activated to its CoA thiolester benzoyl CoA by the dedicated CoA ligase str10. Benzoyl CoA forms the starter unit for the highly reducing polyketide synthase stpks1 that produces the polyketide prestrobilutin A. The FAD-dependent oxygenase str9 then catalyzes the key oxidative rearrangement responsible for the creation of the beta-methoxyacrylate toxophore. Str9 performs epoxidation of the 2,3 olefin of prestrobilutin A, followed by Meinwald rearrangement to furnish the aldehyde intermediate. Rapid enolization of the aldehyde intermediate would give the beta-methoxyacrylate skeleton and methylations catalyzed by str2 and str3 complete the synthesis and lead to the production of strobilurin A. The short-chain dehydrogenase stl2 and the dehydrogenase str4 play a role in the shunt pathway leading to the production of bolineol. The cluster encodes no obvious halogenase gene that could be involved in production of strobilurin B, nor any obvious dimethylallyl-transferase that could be involved in the production of strobilurin G. It is possible that unknown proteins encoded in, or near, the cluster (such as str1 or stl1) may form new classes of halogenases or dimethylally-transferases, or that the responsible genes are located elsewhere on the genome. Similarly, proteins encoded by str5/str6 hydrolases appear to have no chemical role in the biosynthesis of strobilurin A. Finally, no obvious self-resistance gene is found within the cluster. The chain is Aldo-keto reductase str7 from Strobilurus tenacellus.